A 432-amino-acid polypeptide reads, in one-letter code: Anaerobic glycerol-3-phosphate dehydrogenase subunit B (432 aa).

Belongs to the anaerobic G-3-P dehydrogenase subunit B family. Composed of a catalytic GlpA/B dimer and of membrane bound GlpC. FMN serves as cofactor.

It catalyses the reaction a quinone + sn-glycerol 3-phosphate = dihydroxyacetone phosphate + a quinol. The protein operates within polyol metabolism; glycerol degradation via glycerol kinase pathway; glycerone phosphate from sn-glycerol 3-phosphate (anaerobic route): step 1/1. In terms of biological role, conversion of glycerol 3-phosphate to dihydroxyacetone. Uses fumarate or nitrate as electron acceptor. This Histophilus somni (strain 129Pt) (Haemophilus somnus) protein is Anaerobic glycerol-3-phosphate dehydrogenase subunit B.